Here is a 131-residue protein sequence, read N- to C-terminus: Large ribosomal subunit protein bL12 (131 aa).

The protein belongs to the bacterial ribosomal protein bL12 family. Homodimer. Part of the ribosomal stalk of the 50S ribosomal subunit. Forms a multimeric L10(L12)X complex, where L10 forms an elongated spine to which 2 to 4 L12 dimers bind in a sequential fashion. Binds GTP-bound translation factors.

Its function is as follows. Forms part of the ribosomal stalk which helps the ribosome interact with GTP-bound translation factors. Is thus essential for accurate translation. This Tropheryma whipplei (strain Twist) (Whipple's bacillus) protein is Large ribosomal subunit protein bL12.